We begin with the raw amino-acid sequence, 476 residues long: Siroheme synthase (476 aa).

The precorrin-2 dehydrogenase /sirohydrochlorin ferrochelatase stretch occupies residues 1–203 (MNYFPVFADL…RQIEAAKKEL (203 aa)). Residues 22 to 23 (TI) and 43 to 44 (QK) contribute to the NAD(+) site. At S128 the chain carries Phosphoserine. Residues 214 to 476 (GSVSLVGAGP…LDSLRIERVA (263 aa)) are uroporphyrinogen-III C-methyltransferase. P223 contributes to the S-adenosyl-L-methionine binding site. The active-site Proton acceptor is the D246. Residue K268 is the Proton donor of the active site. S-adenosyl-L-methionine-binding positions include 299-301 (GGD), V304, 329-330 (TA), M381, and G410.

In the N-terminal section; belongs to the precorrin-2 dehydrogenase / sirohydrochlorin ferrochelatase family. It in the C-terminal section; belongs to the precorrin methyltransferase family.

The enzyme catalyses uroporphyrinogen III + 2 S-adenosyl-L-methionine = precorrin-2 + 2 S-adenosyl-L-homocysteine + H(+). The catalysed reaction is precorrin-2 + NAD(+) = sirohydrochlorin + NADH + 2 H(+). It catalyses the reaction siroheme + 2 H(+) = sirohydrochlorin + Fe(2+). Its pathway is cofactor biosynthesis; adenosylcobalamin biosynthesis; precorrin-2 from uroporphyrinogen III: step 1/1. It functions in the pathway cofactor biosynthesis; adenosylcobalamin biosynthesis; sirohydrochlorin from precorrin-2: step 1/1. The protein operates within porphyrin-containing compound metabolism; siroheme biosynthesis; precorrin-2 from uroporphyrinogen III: step 1/1. It participates in porphyrin-containing compound metabolism; siroheme biosynthesis; siroheme from sirohydrochlorin: step 1/1. Its pathway is porphyrin-containing compound metabolism; siroheme biosynthesis; sirohydrochlorin from precorrin-2: step 1/1. Multifunctional enzyme that catalyzes the SAM-dependent methylations of uroporphyrinogen III at position C-2 and C-7 to form precorrin-2 via precorrin-1. Then it catalyzes the NAD-dependent ring dehydrogenation of precorrin-2 to yield sirohydrochlorin. Finally, it catalyzes the ferrochelation of sirohydrochlorin to yield siroheme. The chain is Siroheme synthase from Mannheimia succiniciproducens (strain KCTC 0769BP / MBEL55E).